The chain runs to 403 residues: Double C2-like domain-containing protein alpha (403 aa).

The interval 1-92 is interaction with UNC13D and DYNLT1; it reads MRGRRGDRMT…DSYDSDDTTA (92 aa). C2 domains follow at residues 92–214 and 254–387; these read ALGT…HFNI and ERGR…ERWH. Asp123, Asp129, Asp184, Asp186, Asp285, Asp291, Asp345, Asp347, and Asp353 together coordinate Ca(2+). Residues 218 to 403 are interaction with UNC13D; sequence RQVPLPSPSS…PPAAGALPLA (186 aa).

As to quaternary structure, interacts (via N-terminus) with UNC13A. Interacts with cytoplasmic dynein light chain DYNLT1. Interacts with UNC13D. The cofactor is Ca(2+). As to expression, predominantly expressed in brain. Also found in non-neural tissues. Expressed in RBL-2H3 mast cell line.

The protein resides in the cytoplasmic vesicle. It is found in the secretory vesicle. Its subcellular location is the synaptic vesicle membrane. The protein localises to the synapse. It localises to the synaptosome. The protein resides in the lysosome. In terms of biological role, calcium sensor which most probably regulates fusion of vesicles with membranes. Binds calcium and phospholipids. May be involved in calcium dependent neurotransmitter release through the interaction with UNC13A. May be involved in calcium-dependent spontaneous release of neurotransmitter in absence of action potentials in neuronal cells. Regulates Ca(2+)-dependent secretory lysosome exocytosis in mast cells. This chain is Double C2-like domain-containing protein alpha (Doc2a), found in Rattus norvegicus (Rat).